The primary structure comprises 168 residues: Crossover junction endodeoxyribonuclease RuvC (168 aa).

Active-site residues include Asp8, Glu68, and Asp140. Mg(2+) is bound by residues Asp8, Glu68, and Asp140.

Belongs to the RuvC family. Homodimer which binds Holliday junction (HJ) DNA. The HJ becomes 2-fold symmetrical on binding to RuvC with unstacked arms; it has a different conformation from HJ DNA in complex with RuvA. In the full resolvosome a probable DNA-RuvA(4)-RuvB(12)-RuvC(2) complex forms which resolves the HJ. The cofactor is Mg(2+).

The protein localises to the cytoplasm. The enzyme catalyses Endonucleolytic cleavage at a junction such as a reciprocal single-stranded crossover between two homologous DNA duplexes (Holliday junction).. The RuvA-RuvB-RuvC complex processes Holliday junction (HJ) DNA during genetic recombination and DNA repair. Endonuclease that resolves HJ intermediates. Cleaves cruciform DNA by making single-stranded nicks across the HJ at symmetrical positions within the homologous arms, yielding a 5'-phosphate and a 3'-hydroxyl group; requires a central core of homology in the junction. The consensus cleavage sequence is 5'-(A/T)TT(C/G)-3'. Cleavage occurs on the 3'-side of the TT dinucleotide at the point of strand exchange. HJ branch migration catalyzed by RuvA-RuvB allows RuvC to scan DNA until it finds its consensus sequence, where it cleaves and resolves the cruciform DNA. The polypeptide is Crossover junction endodeoxyribonuclease RuvC (Gluconobacter oxydans (strain 621H) (Gluconobacter suboxydans)).